The sequence spans 1296 residues: ABC transporter B family member 21 (1296 aa).

The interval 1 to 59 (MDSVIESEEGLKVDSPNRADAETSNSKIHEEDEKELKTESDLKEEKKKTEKNKQEEDEK) is disordered. The span at 9–59 (EGLKVDSPNRADAETSNSKIHEEDEKELKTESDLKEEKKKTEKNKQEEDEK) shows a compositional bias: basic and acidic residues. The helical transmembrane segment at 77-97 (IILMILGTIGAVGNGLGFPIM) threads the bilayer. Positions 80–368 (MILGTIGAVG…ASPCLSAFAA (289 aa)) constitute an ABC transmembrane type-1 1 domain. A glycan (N-linked (GlcNAc...) asparagine) is linked at Asn113. 5 helical membrane-spanning segments follow: residues 128-148 (FVYLGLGTLVAALLQVSGWMI), 205-225 (IQLVSTFIGGFVIAFTEGWLL), 227-247 (LVMVSSIPLLVMSGAALAIVI), 307-327 (GLGLGTLNIVIFCTYALAVWY), and 336-356 (GYTGGQVLIIIFAVLTGSMSL). The ABC transporter 1 domain maps to 403-639 (IELNNVNFSY…PEGAYSQLIR (237 aa)). Asn409 carries N-linked (GlcNAc...) asparagine glycosylation. 438-445 (GQSGSGKS) is a binding site for ATP. N-linked (GlcNAc...) asparagine glycosylation is found at Asn505, Asn519, and Asn590. The span at 640–662 (LQEDTKQTEDSTDEQKLSMESMK) shows a compositional bias: basic and acidic residues. The tract at residues 640–672 (LQEDTKQTEDSTDEQKLSMESMKRSSLRKSSLS) is disordered. Phosphoserine occurs at positions 657 and 660. The 288-residue stretch at 730-1017 (LILGSIAAVL…SSSLSPDSSK (288 aa)) folds into the ABC transmembrane type-1 2 domain. Transmembrane regions (helical) follow at residues 731–751 (ILGSIAAVLNGVILPIFGILI) and 774–794 (IIFMLLGVASMVVFPAQTIFF). Asn826 carries an N-linked (GlcNAc...) asparagine glycan. The next 3 membrane-spanning stretches (helical) occupy residues 865–885 (VIAFVASWQLAFIVLAMLPLI), 952–972 (GIVSGIGFGVSFFVLFSSYAA), and 986–1006 (TTFDSVFRVFFALTMAAVAIS). Positions 1052-1289 (IELRHISFKY…KDGVYASLVQ (238 aa)) constitute an ABC transporter 2 domain. 1087–1094 (GESGSGKS) provides a ligand contact to ATP. 2 N-linked (GlcNAc...) asparagine glycosylation sites follow: Asn1141 and Asn1240.

The protein belongs to the ABC transporter superfamily. ABCB family. Multidrug resistance exporter (TC 3.A.1.201) subfamily.

It localises to the membrane. This chain is ABC transporter B family member 21 (ABCB21), found in Arabidopsis thaliana (Mouse-ear cress).